The following is a 309-amino-acid chain: UPF0252 protein PH0672 (309 aa).

2 helical membrane passes run 5–25 (SVII…NESI) and 106–126 (AVLT…LMIF).

Belongs to the UPF0252 family.

It localises to the cell membrane. The polypeptide is UPF0252 protein PH0672 (Pyrococcus horikoshii (strain ATCC 700860 / DSM 12428 / JCM 9974 / NBRC 100139 / OT-3)).